Reading from the N-terminus, the 484-residue chain is Aldehyde dehydrogenase family 3 member A2 (484 aa).

Topologically, residues Met1–Arg463 are cytoplasmic. Gly185–Gly190 contacts NAD(+). Catalysis depends on residues Glu207 and Cys241. Ser293 is modified (phosphoserine). A helical membrane pass occupies residues Leu464 to Leu484. The Prevents secretion from ER signature appears at Lys481 to Leu484.

It belongs to the aldehyde dehydrogenase family. Homodimer. In terms of processing, the N-terminus is blocked.

Its subcellular location is the microsome membrane. The protein resides in the endoplasmic reticulum membrane. It catalyses the reaction an aldehyde + NAD(+) + H2O = a carboxylate + NADH + 2 H(+). The enzyme catalyses a fatty aldehyde + NAD(+) + H2O = a fatty acid + NADH + 2 H(+). It carries out the reaction (2E)-hexadecenal + NAD(+) + H2O = (E)-hexadec-2-enoate + NADH + 2 H(+). The catalysed reaction is hexadecanoate + NADH + 2 H(+) = hexadecanal + NAD(+) + H2O. It catalyses the reaction 22-oxodocosanoate + NAD(+) + H2O = docosanedioate + NADH + 2 H(+). The enzyme catalyses 2,6,10,14-tetramethylpentadecanal + NAD(+) + H2O = 2,6,10,14-tetramethylpentadecanoate + NADH + 2 H(+). It carries out the reaction octadecanal + NAD(+) + H2O = octadecanoate + NADH + 2 H(+). The catalysed reaction is dodecanoate + NADH + 2 H(+) = dodecanal + NAD(+) + H2O. It catalyses the reaction decanal + NAD(+) + H2O = decanoate + NADH + 2 H(+). The enzyme catalyses tetradecanal + NAD(+) + H2O = tetradecanoate + NADH + 2 H(+). It carries out the reaction octanal + NAD(+) + H2O = octanoate + NADH + 2 H(+). The catalysed reaction is heptanal + NAD(+) + H2O = heptanoate + NADH + 2 H(+). It catalyses the reaction (2E,6E)-farnesal + NAD(+) + H2O = (2E,6E)-farnesoate + NADH + 2 H(+). Functionally, catalyzes the oxidation of medium and long-chain aliphatic aldehydes to fatty acids. Active on a variety of saturated and unsaturated aliphatic aldehydes between 6 and 24 carbons in length. Responsible for conversion of the sphingosine 1-phosphate (S1P) degradation product hexadecenal to hexadecenoic acid. The polypeptide is Aldehyde dehydrogenase family 3 member A2 (Aldh3a2) (Rattus norvegicus (Rat)).